Consider the following 20-residue polypeptide: GSLVKLVSTLLSLVPSLMKG.

Met18 is modified (methionine sulfoxide; in form U1-PONTX-Dq3c). At Lys19 the chain carries Lysine amide; in form U1-PONTX-Dq3a and U1-PONTX-Dq3c.

Post-translationally, the peptide spanning residues 2 to 19 occurs in 3 forms and has been given 3 different names. U1-PONTX-Dq3a has an amidated Lys-19, U1-PONTX-Dq3c has an amidated Lys-19 and an oxidized Met-18, and U1-PONTX-Dq3b has no modifications at either Met-18 or Lys-19. In terms of tissue distribution, expressed by the venom gland.

It localises to the secreted. In terms of biological role, may have antimicrobial properties, like most ant linear peptides. The chain is Poneritoxin from Dinoponera quadriceps (South American ant).